A 172-amino-acid chain; its full sequence is Protein PLASTID REDOX INSENSITIVE 2, chloroplastic (172 aa).

Residues 1–54 (MAARLWAAAVAPATLNPPLLTLSASSSPSSSRLRRSVLGRLRSRAPRPADFVCR) constitute a chloroplast transit peptide.

It localises to the plastid. The protein localises to the chloroplast stroma. The protein resides in the chloroplast nucleoid. Its function is as follows. Required for the activity of the plastid-encoded RNA polymerase (PEP) and full expression of genes transcribed by PEP. The chain is Protein PLASTID REDOX INSENSITIVE 2, chloroplastic from Oryza sativa subsp. japonica (Rice).